Reading from the N-terminus, the 317-residue chain is Aspartate carbamoyltransferase catalytic subunit (317 aa).

R66 and T67 together coordinate carbamoyl phosphate. K94 contributes to the L-aspartate binding site. Residues R116, H144, and Q147 each contribute to the carbamoyl phosphate site. The L-aspartate site is built by R177 and R231. Carbamoyl phosphate-binding residues include G272 and P273.

The protein belongs to the aspartate/ornithine carbamoyltransferase superfamily. ATCase family. As to quaternary structure, heterododecamer (2C3:3R2) of six catalytic PyrB chains organized as two trimers (C3), and six regulatory PyrI chains organized as three dimers (R2).

The enzyme catalyses carbamoyl phosphate + L-aspartate = N-carbamoyl-L-aspartate + phosphate + H(+). It participates in pyrimidine metabolism; UMP biosynthesis via de novo pathway; (S)-dihydroorotate from bicarbonate: step 2/3. Catalyzes the condensation of carbamoyl phosphate and aspartate to form carbamoyl aspartate and inorganic phosphate, the committed step in the de novo pyrimidine nucleotide biosynthesis pathway. The chain is Aspartate carbamoyltransferase catalytic subunit from Rhodopseudomonas palustris (strain HaA2).